Consider the following 156-residue polypeptide: Ribosomal RNA large subunit methyltransferase H (156 aa).

S-adenosyl-L-methionine-binding positions include leucine 73, glycine 104, and 123 to 128 (VSSLTL).

It belongs to the RNA methyltransferase RlmH family. Homodimer.

It is found in the cytoplasm. It carries out the reaction pseudouridine(1915) in 23S rRNA + S-adenosyl-L-methionine = N(3)-methylpseudouridine(1915) in 23S rRNA + S-adenosyl-L-homocysteine + H(+). In terms of biological role, specifically methylates the pseudouridine at position 1915 (m3Psi1915) in 23S rRNA. This is Ribosomal RNA large subunit methyltransferase H from Paraburkholderia phytofirmans (strain DSM 17436 / LMG 22146 / PsJN) (Burkholderia phytofirmans).